A 275-amino-acid chain; its full sequence is Bis(5'-nucleosyl)-tetraphosphatase, symmetrical (275 aa).

It belongs to the Ap4A hydrolase family.

The catalysed reaction is P(1),P(4)-bis(5'-adenosyl) tetraphosphate + H2O = 2 ADP + 2 H(+). Its function is as follows. Hydrolyzes diadenosine 5',5'''-P1,P4-tetraphosphate to yield ADP. The sequence is that of Bis(5'-nucleosyl)-tetraphosphatase, symmetrical from Actinobacillus succinogenes (strain ATCC 55618 / DSM 22257 / CCUG 43843 / 130Z).